Here is a 54-residue protein sequence, read N- to C-terminus: Glutathione S-transferase 6.7 (54 aa).

This sequence belongs to the GST superfamily. Theta family. Homodimer. Post-translationally, the N-terminus is blocked.

It localises to the cytoplasm. The catalysed reaction is RX + glutathione = an S-substituted glutathione + a halide anion + H(+). Conjugation of reduced glutathione to a wide number of exogenous and endogenous hydrophobic electrophiles. This Dicentrarchus labrax (European seabass) protein is Glutathione S-transferase 6.7.